An 842-amino-acid polypeptide reads, in one-letter code: MLLNLRLDGSSLHVLCSTKTLPISSPLDKFPSFKKLKQNYVPGTHESDKGPQRSTRNGDRGCGTVAHEVVAGKNLLLVNPSNGCVGKSGIIDGFVDKRSKDARFGGNGLVSEVHTKCSTKRLSYGGCIPAILEALDSIEDVEDALSPWAERLSNKERTIILKEQIHWERAVEIFEWFKSKGCYELNVIHYNIMLRILGKACKWRYVQSLWDEMIRKGIKPINSTYGTLIDVYSKGGLKVHALCWLGKMSKIGMQPDEVTTGIVLQMYKKAREFQKAEEFFKKWSCDENKADSHVCLSSYTYNTMIDTYGKSGQIKEASETFKRMLEEGIVPTTVTFNTMIHIYGNNGQLGEVTSLMKTMKLHCAPDTRTYNILISLHTKNNDIERAGAYFKEMKDDGLKPDPVSYRTLLYAFSIRHMVEEAEGLIAEMDDDNVEIDEYTQSALTRMYVEAEMLEKSWSWFKRFHVAGNMSSEGYSANIDAYGERGYLSEAERVFICCQEVNKRTVIEYNVMIKAYGISKSCEKACELFESMMSYGVTPDKCTYNTLVQILASADMPHKGRCYLEKMRETGYVSDCIPYCAVISSFVKLGQLNMAEEVYKEMVEYNIEPDVVVYGVLINAFADTGNVQQAMSYVEAMKEAGIPGNSVIYNSLIKLYTKVGYLDEAEAIYRKLLQSCNKTQYPDVYTSNCMINLYSERSMVRKAEAIFDSMKQRGEANEFTFAMMLCMYKKNGRFEEATQIAKQMREMKILTDPLSYNSVLGLFALDGRFKEAVETFKEMVSSGIQPDDSTFKSLGTILMKLGMSKKAVRKIEEIRKKEIKRGLELWISTLSSLVGIGDCVDEL.

Residues 40–61 form a disordered region; that stretch reads YVPGTHESDKGPQRSTRNGDRG. A compositionally biased stretch (basic and acidic residues) spans 45–59; it reads HESDKGPQRSTRNGD. 18 PPR repeats span residues 186–220, 221–255, 256–290, 297–331, 332–362, 366–400, 401–435, 436–470, 474–500, 504–538, 539–573, 574–608, 609–643, 644–674, 682–712, 716–750, 751–785, and 786–820; these read NVIH…GIKP, INST…GMQP, DEVT…ENKA, SSYT…GIVP, TTVT…MKLH, DTRT…GLKP, DPVS…NVEI, DEYT…GNMS, YSAN…CQEV, TVIE…GVTP, DKCT…GYVS, DCIP…NIEP, DVVV…GIPG, NSVI…LLQS, DVYT…MKQR, NEFT…KILT, DPLS…GIQP, and DDST…EIKR.

Belongs to the PPR family. P subfamily.

In Arabidopsis thaliana (Mouse-ear cress), this protein is Pentatricopeptide repeat-containing protein At3g23020.